The following is a 496-amino-acid chain: Cytochrome P450 monooxygenase claT (496 aa).

A helical membrane pass occupies residues 2–22; that stretch reads LSLIVEATLLLVVLVLSAHYV. Cys423 lines the heme pocket.

This sequence belongs to the cytochrome P450 family. The cofactor is heme.

The protein resides in the membrane. The enzyme catalyses wigandol + 4 reduced [NADPH--hemoprotein reductase] + 4 O2 = arnebinol A + 4 oxidized [NADPH--hemoprotein reductase] + 6 H2O + 4 H(+). It carries out the reaction arnebinol A + reduced [NADPH--hemoprotein reductase] + O2 = clavilactone A + oxidized [NADPH--hemoprotein reductase] + H2O + H(+). The catalysed reaction is (2E)-geranylhydroquinone + reduced [NADPH--hemoprotein reductase] + O2 = isoalliodorol + oxidized [NADPH--hemoprotein reductase] + H2O + H(+). It functions in the pathway secondary metabolite biosynthesis; terpenoid biosynthesis. Its function is as follows. Cytochrome P450 monooxygenase; part of the gene cluster that mediates the biosynthesis of clavilactone A, a meroterpenoid that features a unique benzo-fused ten-membered carbocyclic ring unit with an alpha,beta-epoxy-gamma-lactone moiety, forming an intriguing 10/5/3 tricyclic nested skeleton. ClaR, ClaS and ClaT are sufficient to produce clavilactone A. Within the pathway, claT acts as a multifunctional cytochrome P450 monooxygenase that catalyzes a ten-electron oxidation to accomplish the biosynthesis of the 10/5/3 tricyclic nested skeleton in clavilactones. The biosynthesis begins with the prenyltransferase claS that transfers geranyl pyrophosphate (GPP) to hydroquinone to produces geranylhydroquinone. The cytochrome P450 monooxygenase claR then catalyzes the diradical coupling reaction between the intramolecular hydroquinone and allyl moieties to form the benzo-fused ten-membered carbocyclic ring unit of wigantol. Finally the cytochrome P450 monooxygenase claT exquisitely and stereoselectively assembles the alpha,beta-epoxy-gamma-lactone moiety, producing clavilactone A via arnebinol A. This chain is Cytochrome P450 monooxygenase claT, found in Ampulloclitocybe clavipes (Club foot).